The chain runs to 106 residues: Large ribosomal subunit protein eL42 (106 aa).

Positions 37–56 (SQGKRRYDRKQSGYGGQTKP) are disordered.

The protein belongs to the eukaryotic ribosomal protein eL42 family.

The chain is Large ribosomal subunit protein eL42 (RPL44) from Pichia kudriavzevii (Yeast).